Here is a 394-residue protein sequence, read N- to C-terminus: MPALDLLLNLHKSLFVGFPGRVLVSLFGVSLLLLCLAGVLLHSRRWRDLRRWRRDRGLRLALFDLHGLIGIWGLPWLLLFGFTGALSGLGALGTLLLAPVAYPQEPNRVFVELMGPPPPAAEGRPLASRIDLDRLLAGDAVRAPGFVAQRLSLSHAGDVAGSVEIAGIRRGLPSTANFERHRYRLADGTLLGERSSAQRGFWLRAFIAVQPLHFAQYQWLGPGWSAALRGLHLAMGLGACLLCASGLYLWLQRRASAPDARVRLLQRLSQGFCAGLVAAAALLLLGLQLAPSELLAGPWPGRLFLVLWAAAGLAALLLPGDWPLARGLLGVAGLACLAAAVAHLAPWLMRGRLPALGPDLTLILCGALLIRHAWMQARAAAPPAHPRVTGDHHA.

Helical transmembrane passes span 22 to 42 (VLVSLFGVSLLLLCLAGVLLH), 60 to 80 (LALFDLHGLIGIWGLPWLLLF), 81 to 101 (GFTGALSGLGALGTLLLAPVA), 231 to 251 (LHLAMGLGACLLCASGLYLWL), 271 to 291 (GFCAGLVAAAALLLLGLQLAP), 303 to 323 (LFLVLWAAAGLAALLLPGDWP), 328 to 348 (LLGVAGLACLAAAVAHLAPWL), and 355 to 375 (ALGPDLTLILCGALLIRHAWM).

It is found in the cell membrane. This is an uncharacterized protein from Pseudomonas aeruginosa (strain ATCC 15692 / DSM 22644 / CIP 104116 / JCM 14847 / LMG 12228 / 1C / PRS 101 / PAO1).